The following is a 293-amino-acid chain: Exosome complex component RRP4 (293 aa).

Positions 1 to 20 (MALEMRLPKARKPLSESLGR) are disordered. One can recognise an S1 motif domain in the interval 79 to 159 (EVGDIVVGRI…SDGAVSLHTR (81 aa)). Residue Ser-124 is modified to Phosphoserine.

This sequence belongs to the RRP4 family. In terms of assembly, component of the RNA exosome core complex (Exo-9), composed of EXOSC1, EXOSC2, EXOSC3, EXOSC4, EXOSC5, EXOSC6, EXOSC7, EXOSC8 and EXOSC9; within the complex interacts with EXOSC4 and EXOSC7. The catalytically inactive RNA exosome core complex (Exo-9) associates with the catalytic subunit EXOSC10/RRP6. Exo-9 may associate with DIS3 to form the nucleolar exosome complex, or DIS3L to form the cytoplasmic exosome complex. Exo-9 is formed by a hexameric base ring consisting of the heterodimers EXOSC4-EXOSC9, EXOSC5-EXOSC8 and EXOSC6-EXOSC7, and a cap ring consisting of EXOSC1, EXOSC2 and EXOSC3. The RNA exosome complex associates with cofactors C1D/RRP47, MPHOSPH6/MPP6 and MTREX/MTR4. Interacts with GTPBP1. Interacts with ZFP36L1 (via N-terminus).

It localises to the cytoplasm. The protein localises to the nucleus. Its subcellular location is the nucleolus. Non-catalytic component of the RNA exosome complex which has 3'-&gt;5' exoribonuclease activity and participates in a multitude of cellular RNA processing and degradation events. In the nucleus, the RNA exosome complex is involved in proper maturation of stable RNA species such as rRNA, snRNA and snoRNA, in the elimination of RNA processing by-products and non-coding 'pervasive' transcripts, such as antisense RNA species and promoter-upstream transcripts (PROMPTs), and of mRNAs with processing defects, thereby limiting or excluding their export to the cytoplasm. The RNA exosome may be involved in Ig class switch recombination (CSR) and/or Ig variable region somatic hypermutation (SHM) by targeting AICDA deamination activity to transcribed dsDNA substrates. In the cytoplasm, the RNA exosome complex is involved in general mRNA turnover and specifically degrades inherently unstable mRNAs containing AU-rich elements (AREs) within their 3' untranslated regions, and in RNA surveillance pathways, preventing translation of aberrant mRNAs. It seems to be involved in degradation of histone mRNA. The catalytic inactive RNA exosome core complex of 9 subunits (Exo-9) is proposed to play a pivotal role in the binding and presentation of RNA for ribonucleolysis, and to serve as a scaffold for the association with catalytic subunits and accessory proteins or complexes. EXOSC2 as peripheral part of the Exo-9 complex stabilizes the hexameric ring of RNase PH-domain subunits through contacts with EXOSC4 and EXOSC7. The protein is Exosome complex component RRP4 (Exosc2) of Mus musculus (Mouse).